The following is a 634-amino-acid chain: Chaperone protein HtpG (634 aa).

The tract at residues 1–342 is a; substrate-binding; the sequence is MSVETQKETL…SNDLSLNVSR (342 aa). The segment at 343–559 is b; sequence EILQKDPVID…EQDLGLQMRQ (217 aa). The segment at 560–634 is c; that stretch reads ILEASGQKVP…LNKLLVELSA (75 aa).

The protein belongs to the heat shock protein 90 family. Homodimer.

Its subcellular location is the cytoplasm. Its function is as follows. Molecular chaperone. Has ATPase activity. The polypeptide is Chaperone protein HtpG (Ectopseudomonas mendocina (strain ymp) (Pseudomonas mendocina)).